The primary structure comprises 398 residues: Phosphoglycerate kinase (398 aa).

Residues 23-25 (DFN), R38, 61-64 (HMGK), R122, and R155 contribute to the substrate site. ATP-binding positions include K206, G297, E328, and 354-357 (GGDS).

It belongs to the phosphoglycerate kinase family. As to quaternary structure, monomer.

The protein localises to the cytoplasm. It catalyses the reaction (2R)-3-phosphoglycerate + ATP = (2R)-3-phospho-glyceroyl phosphate + ADP. It functions in the pathway carbohydrate degradation; glycolysis; pyruvate from D-glyceraldehyde 3-phosphate: step 2/5. The polypeptide is Phosphoglycerate kinase (Clostridium botulinum (strain Hall / ATCC 3502 / NCTC 13319 / Type A)).